We begin with the raw amino-acid sequence, 210 residues long: Cytochrome c4 (210 aa).

A signal peptide spans 1–20 (MNKALVTLLLTLGITGLAHA). Residues C34, C37, H38, M86, C139, C142, H143, and M187 each contribute to the heme c site.

Post-translationally, binds 2 heme c groups covalently per subunit.

It is found in the periplasm. Its function is as follows. Diheme, high potential cytochrome c believed to be an intermediate electron donor to terminal oxidation systems. The protein is Cytochrome c4 (cycA) of Azotobacter vinelandii.